We begin with the raw amino-acid sequence, 54 residues long: ATP synthase F(0) complex subunit 8 (54 aa).

The helical transmembrane segment at 9-25 (WVFLFFLVWLVLGFLGL) threads the bilayer.

This sequence belongs to the ATPase protein 8 family. In terms of assembly, component of the ATP synthase complex composed at least of ATP5F1A/subunit alpha, ATP5F1B/subunit beta, ATP5MC1/subunit c (homooctomer), MT-ATP6/subunit a, MT-ATP8/subunit 8, ATP5ME/subunit e, ATP5MF/subunit f, ATP5MG/subunit g, ATP5MK/subunit k, ATP5MJ/subunit j, ATP5F1C/subunit gamma, ATP5F1D/subunit delta, ATP5F1E/subunit epsilon, ATP5PF/subunit F6, ATP5PB/subunit b, ATP5PD/subunit d, ATP5PO/subunit OSCP. ATP synthase complex consists of a soluble F(1) head domain (subunits alpha(3) and beta(3)) - the catalytic core - and a membrane F(0) domain - the membrane proton channel (subunits c, a, 8, e, f, g, k and j). These two domains are linked by a central stalk (subunits gamma, delta, and epsilon) rotating inside the F1 region and a stationary peripheral stalk (subunits F6, b, d, and OSCP).

It is found in the mitochondrion membrane. In terms of biological role, subunit 8, of the mitochondrial membrane ATP synthase complex (F(1)F(0) ATP synthase or Complex V) that produces ATP from ADP in the presence of a proton gradient across the membrane which is generated by electron transport complexes of the respiratory chain. ATP synthase complex consist of a soluble F(1) head domain - the catalytic core - and a membrane F(1) domain - the membrane proton channel. These two domains are linked by a central stalk rotating inside the F(1) region and a stationary peripheral stalk. During catalysis, ATP synthesis in the catalytic domain of F(1) is coupled via a rotary mechanism of the central stalk subunits to proton translocation. In vivo, can only synthesize ATP although its ATP hydrolase activity can be activated artificially in vitro. Part of the complex F(0) domain. The chain is ATP synthase F(0) complex subunit 8 from Branchiostoma lanceolatum (Common lancelet).